The sequence spans 442 residues: Probable folate-biopterin transporter 7 (442 aa).

A run of 12 helical transmembrane segments spans residues 23-43, 64-82, 87-107, 114-134, 158-178, 184-204, 241-261, 270-290, 302-322, 335-355, 379-399, and 410-430; these read LGFG…ANFF, LPMV…VYFF, IPYI…IAFL, ILAL…VEVA, FVWM…GIAI, QSTF…TINI, IAWI…MFFY, ASLL…WGFA, KLLT…LLFV, VYVL…ILPF, IALA…FVGV, and GLAI…WIYD.

Belongs to the major facilitator superfamily. Folate-biopterin transporter (TC 2.A.71) family.

It is found in the membrane. Could mediate folate transport. The sequence is that of Probable folate-biopterin transporter 7 from Arabidopsis thaliana (Mouse-ear cress).